Here is a 59-residue protein sequence, read N- to C-terminus: UPF0434 protein Mmc1_0910 (59 aa).

Belongs to the UPF0434 family.

This chain is UPF0434 protein Mmc1_0910, found in Magnetococcus marinus (strain ATCC BAA-1437 / JCM 17883 / MC-1).